The following is a 161-amino-acid chain: Ribonuclease H (161 aa).

Residues 3–144 (GLKQISIYTD…CDDLARQAAE (142 aa)) form the RNase H type-1 domain. The Mg(2+) site is built by D12, E50, D72, and D136. The segment at 133–161 (ERCDDLARQAAEAKPSQEDSGYINQQAQA) is disordered. Over residues 150 to 161 (EDSGYINQQAQA) the composition is skewed to polar residues.

Belongs to the RNase H family. As to quaternary structure, monomer. It depends on Mg(2+) as a cofactor.

Its subcellular location is the cytoplasm. The catalysed reaction is Endonucleolytic cleavage to 5'-phosphomonoester.. In terms of biological role, endonuclease that specifically degrades the RNA of RNA-DNA hybrids. This Shewanella halifaxensis (strain HAW-EB4) protein is Ribonuclease H.